The primary structure comprises 597 residues: Aspartate--tRNA(Asp/Asn) ligase (597 aa).

Glu-182 provides a ligand contact to L-aspartate. Positions 206 to 209 (QLFK) are aspartate. Arg-228 contacts L-aspartate. Residues 228-230 (RDE) and Gln-237 contribute to the ATP site. His-456 serves as a coordination point for L-aspartate. Residue Glu-490 participates in ATP binding. L-aspartate is bound at residue Arg-497. 542 to 545 (GFDR) provides a ligand contact to ATP.

This sequence belongs to the class-II aminoacyl-tRNA synthetase family. Type 1 subfamily. In terms of assembly, homodimer.

Its subcellular location is the cytoplasm. The catalysed reaction is tRNA(Asx) + L-aspartate + ATP = L-aspartyl-tRNA(Asx) + AMP + diphosphate. Aspartyl-tRNA synthetase with relaxed tRNA specificity since it is able to aspartylate not only its cognate tRNA(Asp) but also tRNA(Asn). Reaction proceeds in two steps: L-aspartate is first activated by ATP to form Asp-AMP and then transferred to the acceptor end of tRNA(Asp/Asn). This Desulfatibacillum aliphaticivorans protein is Aspartate--tRNA(Asp/Asn) ligase.